A 216-amino-acid chain; its full sequence is Superoxide dismutase [Mn], mitochondrial (216 aa).

A mitochondrion-targeting transit peptide spans 1 to 18 (MSFLNRNLSRTIKAAVRG). Positions 44, 92, 176, and 180 each coordinate Mn(2+).

The protein belongs to the iron/manganese superoxide dismutase family. The cofactor is Mn(2+).

Its subcellular location is the mitochondrion matrix. The catalysed reaction is 2 superoxide + 2 H(+) = H2O2 + O2. In terms of biological role, destroys superoxide anion radicals which are normally produced within the cells and which are toxic to biological systems. This is Superoxide dismutase [Mn], mitochondrial (Sod2) from Glossina morsitans morsitans (Savannah tsetse fly).